Here is a 602-residue protein sequence, read N- to C-terminus: Elongation factor 4 (602 aa).

Residues 6–188 (DHIRNFSIVA…AIVTQLPAPK (183 aa)) form the tr-type G domain. Residues 18-23 (DHGKST) and 135-138 (NKID) each bind GTP.

This sequence belongs to the TRAFAC class translation factor GTPase superfamily. Classic translation factor GTPase family. LepA subfamily.

The protein resides in the cell inner membrane. It carries out the reaction GTP + H2O = GDP + phosphate + H(+). Functionally, required for accurate and efficient protein synthesis under certain stress conditions. May act as a fidelity factor of the translation reaction, by catalyzing a one-codon backward translocation of tRNAs on improperly translocated ribosomes. Back-translocation proceeds from a post-translocation (POST) complex to a pre-translocation (PRE) complex, thus giving elongation factor G a second chance to translocate the tRNAs correctly. Binds to ribosomes in a GTP-dependent manner. The sequence is that of Elongation factor 4 from Brucella anthropi (strain ATCC 49188 / DSM 6882 / CCUG 24695 / JCM 21032 / LMG 3331 / NBRC 15819 / NCTC 12168 / Alc 37) (Ochrobactrum anthropi).